Reading from the N-terminus, the 316-residue chain is Methionyl-tRNA formyltransferase (316 aa).

111 to 114 is a binding site for (6S)-5,6,7,8-tetrahydrofolate; that stretch reads GLLP.

The protein belongs to the Fmt family.

It catalyses the reaction L-methionyl-tRNA(fMet) + (6R)-10-formyltetrahydrofolate = N-formyl-L-methionyl-tRNA(fMet) + (6S)-5,6,7,8-tetrahydrofolate + H(+). Its function is as follows. Attaches a formyl group to the free amino group of methionyl-tRNA(fMet). The formyl group appears to play a dual role in the initiator identity of N-formylmethionyl-tRNA by promoting its recognition by IF2 and preventing the misappropriation of this tRNA by the elongation apparatus. The chain is Methionyl-tRNA formyltransferase from Chlamydia trachomatis serovar A (strain ATCC VR-571B / DSM 19440 / HAR-13).